Reading from the N-terminus, the 334-residue chain is Fructose-1,6-bisphosphatase class 1 (334 aa).

Mg(2+) contacts are provided by Glu89, Asp112, Leu114, and Asp115. Residues 115–118, Asn208, Tyr241, 259–261, and Lys271 contribute to the substrate site; these read DGSS and YLY. Residue Glu277 participates in Mg(2+) binding.

This sequence belongs to the FBPase class 1 family. As to quaternary structure, homotetramer. Mg(2+) serves as cofactor.

The protein localises to the cytoplasm. The enzyme catalyses beta-D-fructose 1,6-bisphosphate + H2O = beta-D-fructose 6-phosphate + phosphate. Its pathway is carbohydrate biosynthesis; gluconeogenesis. The chain is Fructose-1,6-bisphosphatase class 1 from Pectobacterium atrosepticum (strain SCRI 1043 / ATCC BAA-672) (Erwinia carotovora subsp. atroseptica).